The sequence spans 694 residues: Elongation factor G (694 aa).

In terms of domain architecture, tr-type G spans 8–287 (EDYRNFGIMA…AVVEFLPAPT (280 aa)). GTP contacts are provided by residues 17-24 (AHIDAGKT), 86-90 (DTPGH), and 140-143 (NKMD).

This sequence belongs to the TRAFAC class translation factor GTPase superfamily. Classic translation factor GTPase family. EF-G/EF-2 subfamily.

The protein localises to the cytoplasm. Its function is as follows. Catalyzes the GTP-dependent ribosomal translocation step during translation elongation. During this step, the ribosome changes from the pre-translocational (PRE) to the post-translocational (POST) state as the newly formed A-site-bound peptidyl-tRNA and P-site-bound deacylated tRNA move to the P and E sites, respectively. Catalyzes the coordinated movement of the two tRNA molecules, the mRNA and conformational changes in the ribosome. This chain is Elongation factor G, found in Brucella melitensis biotype 1 (strain ATCC 23456 / CCUG 17765 / NCTC 10094 / 16M).